The following is a 403-amino-acid chain: Acetate kinase (403 aa).

Mg(2+) is bound at residue asparagine 8. Lysine 15 contributes to the ATP binding site. Arginine 90 serves as a coordination point for substrate. Catalysis depends on aspartate 147, which acts as the Proton donor/acceptor. ATP contacts are provided by residues 207–211, 282–284, and 330–334; these read HLGSG, DLR, and GVGEN. Residue glutamate 384 coordinates Mg(2+).

This sequence belongs to the acetokinase family. As to quaternary structure, homodimer. Mg(2+) serves as cofactor. The cofactor is Mn(2+).

It localises to the cytoplasm. The enzyme catalyses acetate + ATP = acetyl phosphate + ADP. Its pathway is metabolic intermediate biosynthesis; acetyl-CoA biosynthesis; acetyl-CoA from acetate: step 1/2. Functionally, catalyzes the formation of acetyl phosphate from acetate and ATP. Can also catalyze the reverse reaction. In Exiguobacterium sp. (strain ATCC BAA-1283 / AT1b), this protein is Acetate kinase.